A 478-amino-acid polypeptide reads, in one-letter code: Chromosomal replication initiator protein DnaA (478 aa).

Positions 1–90 (MSVELWQQCV…KRSSAPRAVQ (90 aa)) are domain I, interacts with DnaA modulators. Residues 91-141 (PASPPPAVVQAAPVAIEEASAARTVDAQPVAPATVRTERSVQVEGGLKHTS) are domain II. Residues 142-358 (YLNRAFTFEN…GALKRVIAHS (217 aa)) are domain III, AAA+ region. Residues G186, G188, K189, and T190 each coordinate ATP. Residues 359-478 (HFTNHPITIE…YKNLLRTLTT (120 aa)) are domain IV, binds dsDNA.

It belongs to the DnaA family. Oligomerizes as a right-handed, spiral filament on DNA at oriC.

The protein localises to the cytoplasm. Its function is as follows. Plays an essential role in the initiation and regulation of chromosomal replication. ATP-DnaA binds to the origin of replication (oriC) to initiate formation of the DNA replication initiation complex once per cell cycle. Binds the DnaA box (a 9 base pair repeat at the origin) and separates the double-stranded (ds)DNA. Forms a right-handed helical filament on oriC DNA; dsDNA binds to the exterior of the filament while single-stranded (ss)DNA is stabiized in the filament's interior. The ATP-DnaA-oriC complex binds and stabilizes one strand of the AT-rich DNA unwinding element (DUE), permitting loading of DNA polymerase. After initiation quickly degrades to an ADP-DnaA complex that is not apt for DNA replication. Binds acidic phospholipids. This chain is Chromosomal replication initiator protein DnaA, found in Azotobacter vinelandii (strain DJ / ATCC BAA-1303).